The primary structure comprises 465 residues: Methionine aminopeptidase 2-2 (465 aa).

Residues 1 to 11 are compositionally biased toward basic residues; that stretch reads MGSKTPHNHRR. Residues 1–89 are disordered; the sequence is MGSKTPHNHR…KKKKNTKELE (89 aa). The segment covering 43 to 54 has biased composition (acidic residues); it reads GESEGGEDEDDD. Positions 73-84 are enriched in basic residues; the sequence is RNKRKKKKKKKN. Residue His217 coordinates substrate. Positions 238, 249, and 318 each coordinate a divalent metal cation. His326 contributes to the substrate binding site. Positions 351 and 446 each coordinate a divalent metal cation.

This sequence belongs to the peptidase M24A family. Methionine aminopeptidase eukaryotic type 2 subfamily. It depends on Co(2+) as a cofactor. The cofactor is Zn(2+). Requires Mn(2+) as cofactor. Fe(2+) is required as a cofactor.

Its subcellular location is the cytoplasm. It carries out the reaction Release of N-terminal amino acids, preferentially methionine, from peptides and arylamides.. In terms of biological role, cotranslationally removes the N-terminal methionine from nascent proteins. The N-terminal methionine is often cleaved when the second residue in the primary sequence is small and uncharged (Met-Ala-, Cys, Gly, Pro, Ser, Thr, or Val). This chain is Methionine aminopeptidase 2-2, found in Ajellomyces capsulatus (strain G186AR / H82 / ATCC MYA-2454 / RMSCC 2432) (Darling's disease fungus).